Consider the following 140-residue polypeptide: Histone H2B (140 aa).

Residues methionine 1–proline 10 are compositionally biased toward basic and acidic residues. Positions methionine 1–lysine 48 are disordered. Residues lysine 8 and lysine 9 each carry the N6-acetyllysine; alternate modification. Residues lysine 8 and lysine 9 each participate in a glycyl lysine isopeptide (Lys-Gly) (interchain with G-Cter in SUMO); alternate cross-link. Over residues serine 11–alanine 21 the composition is skewed to low complexity. Position 15 is an N6-acetyllysine (lysine 15). Lysine 25 carries the N6-acetyllysine; alternate modification. Lysine 25 participates in a covalent cross-link: Glycyl lysine isopeptide (Lys-Gly) (interchain with G-Cter in SUMO); alternate. Lysine 26 participates in a covalent cross-link: Glycyl lysine isopeptide (Lys-Gly) (interchain with G-Cter in SUMO). Lysine 134 is covalently cross-linked (Glycyl lysine isopeptide (Lys-Gly) (interchain with G-Cter in ubiquitin)).

The protein belongs to the histone H2B family. The nucleosome is a histone octamer containing two molecules each of H2A, H2B, H3 and H4 assembled in one H3-H4 heterotetramer and two H2A-H2B heterodimers. The octamer wraps approximately 147 bp of DNA. Post-translationally, monoubiquitinated by the ubc2-bre1 complex to form H2BK123ub1. H2BK123ub1 gives a specific tag for epigenetic transcriptional activation and is also prerequisite for H3K4me and H3K79me formation. H2BK123ub1 also modulates the formation of double-strand breaks during meiosis and is a prerequisite for DNA-damage checkpoint activation. In terms of processing, acetylated by gcn5 to form H2BK11ac and H2BK16ac. H2BK16ac can also be formed by esa1. Acetylation of N-terminal lysines and particularly formation of H2BK11acK16ac has a positive effect on transcription. Sumoylation to form H2BK6su or H2BK7su, and probably also H2BK16su or H2BK17su, occurs preferentially near the telomeres and represses gene transcription.

It is found in the nucleus. The protein resides in the chromosome. Core component of nucleosome. Nucleosomes wrap and compact DNA into chromatin, limiting DNA accessibility to the cellular machineries which require DNA as a template. Histones thereby play a central role in transcription regulation, DNA repair, DNA replication and chromosomal stability. DNA accessibility is regulated via a complex set of post-translational modifications of histones, also called histone code, and nucleosome remodeling. The polypeptide is Histone H2B (htb1) (Neosartorya fischeri (strain ATCC 1020 / DSM 3700 / CBS 544.65 / FGSC A1164 / JCM 1740 / NRRL 181 / WB 181) (Aspergillus fischerianus)).